The primary structure comprises 554 residues: Inactive sesquithujene synthase B (554 aa).

2 residues coordinate Mg(2+): D308 and D312. Substrate is bound by residues D308, D312, R449, and N452. The short motif at 308-312 (DDMFD) is the DDXXD motif element. Mg(2+) is bound by residues N452, S456, and E460.

It belongs to the terpene synthase family. As to quaternary structure, monomer. Requires Mg(2+) as cofactor. The cofactor is Mn(2+).

It is found in the cytoplasm. It functions in the pathway secondary metabolite biosynthesis; terpenoid biosynthesis. Non-functional sesquiterpene synthase having less than 1% of the activity found in TPS5A. The sequence is that of Inactive sesquithujene synthase B from Zea mays (Maize).